The primary structure comprises 656 residues: Translation factor GUF1 homolog, mitochondrial (656 aa).

The tr-type G domain occupies 55–236; the sequence is QRIRNFSIIA…EIVRRLPPPD (182 aa). GTP contacts are provided by residues 64-71, 129-133, and 183-186; these read AHVDHGKS, DTPGH, and NKID.

It belongs to the TRAFAC class translation factor GTPase superfamily. Classic translation factor GTPase family. LepA subfamily.

It is found in the mitochondrion inner membrane. The catalysed reaction is GTP + H2O = GDP + phosphate + H(+). Promotes mitochondrial protein synthesis. May act as a fidelity factor of the translation reaction, by catalyzing a one-codon backward translocation of tRNAs on improperly translocated ribosomes. Binds to mitochondrial ribosomes in a GTP-dependent manner. This chain is Translation factor GUF1 homolog, mitochondrial, found in Aedes aegypti (Yellowfever mosquito).